The chain runs to 157 residues: Endoribonuclease YbeY (157 aa).

Zn(2+) contacts are provided by His121, His125, and Asp131.

This sequence belongs to the endoribonuclease YbeY family. The cofactor is Zn(2+).

The protein localises to the cytoplasm. Single strand-specific metallo-endoribonuclease involved in late-stage 70S ribosome quality control and in maturation of the 3' terminus of the 16S rRNA. The protein is Endoribonuclease YbeY of Salinibacter ruber (strain DSM 13855 / M31).